A 185-amino-acid polypeptide reads, in one-letter code: Translation initiation factor IF-3 (185 aa).

This sequence belongs to the IF-3 family. Monomer.

It is found in the cytoplasm. Its function is as follows. IF-3 binds to the 30S ribosomal subunit and shifts the equilibrium between 70S ribosomes and their 50S and 30S subunits in favor of the free subunits, thus enhancing the availability of 30S subunits on which protein synthesis initiation begins. This Bacteroides thetaiotaomicron (strain ATCC 29148 / DSM 2079 / JCM 5827 / CCUG 10774 / NCTC 10582 / VPI-5482 / E50) protein is Translation initiation factor IF-3.